The following is a 368-amino-acid chain: Solute carrier family 35 member G1 (368 aa).

A run of 10 helical transmembrane segments spans residues 72–92 (GLGLFYTVLSAFLFSVASLFV), 100–120 (AVEISAFRCVVQMLVIIPCLI), 134–154 (LFLFLRGVFGSSAMILMYYAF), 161–181 (DATVIAFSCPVFTSIFAWIFL), 190–210 (AFFTLFAIAGVILIVRPPFIF), 225–245 (IKGTFAAIGHAVLAAITLVIL), 256–276 (LSIWYYVILGLPEAIIILFVI), 289–309 (LFLILIGLLGLGGQIFITKAV), 316–336 (LVAIMKTMDIVFAFIFQIAFF), and 340–360 (PTWWTVGGALCVVVSTTGATI). EamA domains are found at residues 83–205 (FLFS…LIVR) and 236–360 (VLAA…GATI).

This sequence belongs to the TMEM20 family. In terms of assembly, interacts with STIM1; stimulated by depletion of intracellular calcium. Interacts with ORAI1. Interacts with the plasma membrane calcium-transporting ATPases ATP2B1 and ATP2B4. Interacts with ATP1A1, ATP2A2, KPNB1 and XPO1.

Its subcellular location is the cell membrane. It localises to the endoplasmic reticulum membrane. In terms of biological role, may play a role in intracellular calcium sensing and homeostasis. May act as a negative regulator of plasma membrane calcium-transporting ATPases preventing calcium efflux from the cell. In Mus musculus (Mouse), this protein is Solute carrier family 35 member G1 (Slc35g1).